A 396-amino-acid chain; its full sequence is Ribosomal RNA large subunit methyltransferase I (396 aa).

Positions 2 to 81 constitute a PUA domain; sequence SVRLVLAKGR…ESIDIAFFTR (80 aa).

Belongs to the methyltransferase superfamily. RlmI family.

Its subcellular location is the cytoplasm. The catalysed reaction is cytidine(1962) in 23S rRNA + S-adenosyl-L-methionine = 5-methylcytidine(1962) in 23S rRNA + S-adenosyl-L-homocysteine + H(+). In terms of biological role, specifically methylates the cytosine at position 1962 (m5C1962) of 23S rRNA. The protein is Ribosomal RNA large subunit methyltransferase I of Escherichia coli (strain UTI89 / UPEC).